The following is a 92-amino-acid chain: uncharacterized protein (92 aa).

The signal sequence occupies residues 1–23 (MNPAIVVIIVLLVAALLIWACKA).

This is an uncharacterized protein from Acheta domesticus (House cricket).